The following is a 1481-amino-acid chain: ABC-type transporter braE (1481 aa).

Transmembrane regions (helical) follow at residues 27-47 (FTVK…FILA), 86-106 (LILI…SSAL), 130-150 (IFLS…ARTY), 159-179 (EIAF…MLLL), 269-289 (LYVP…SFFC), and 308-328 (PANI…VIAI). In terms of domain architecture, ABC transmembrane type-1 1 spans 281–549 (LAAIGSFFCQ…LLETLPQMAA (269 aa)). Asn367 carries N-linked (GlcNAc...) asparagine glycosylation. Helical transmembrane passes span 389–409 (ELWG…NLLG), 410–430 (VAFI…SFFM), and 491–511 (LMLT…PITF). Positions 594-823 (VAIKDGSFGW…QSYIHSLGVK (230 aa)) constitute an ABC transporter 1 domain. 627–634 (GPIASGKS) is a binding site for ATP. 2 N-linked (GlcNAc...) asparagine glycosylation sites follow: Asn671 and Asn813. 6 helical membrane-spanning segments follow: residues 887–907 (IAIF…TIWL), 928–948 (AIYA…GVLL), 1001–1021 (SALL…AVIA), 1026–1046 (YLAI…KFYL), 1111–1131 (LHFV…SLAV), and 1144–1164 (LVTL…YTAL). Residues 887 to 1166 (IAIFTSGLLY…VVIYYTALET (280 aa)) form the ABC transmembrane type-1 2 domain. Residues Asn1207 and Asn1232 are each glycosylated (N-linked (GlcNAc...) asparagine). The 254-residue stretch at 1224 to 1477 (LTTNELSSND…PGTRFGELWS (254 aa)) folds into the ABC transporter 2 domain. 1260 to 1267 (GRTGSGKS) provides a ligand contact to ATP. N-linked (GlcNAc...) asparagine glycans are attached at residues Asn1330 and Asn1364.

This sequence belongs to the ABC transporter superfamily. ABCC family. Conjugate transporter (TC 3.A.1.208) subfamily.

It is found in the membrane. Its function is as follows. ABC-type transporter; part of the gene cluster that mediates the biosynthesis of the brasilane terpene glycosides brasilane D and E. The protein is ABC-type transporter braE of Annulohypoxylon truncatum (Hypoxylon truncatum).